Here is an 838-residue protein sequence, read N- to C-terminus: G-protein coupled receptor-associated sorting protein 2 (838 aa).

Disordered stretches follow at residues 1–121 (MTGA…PGAR), 218–293 (ASNE…NPFS), and 531–552 (LELS…PSPE). Positions 13 to 31 (KPEKKAGEEVVAGPEREND) are enriched in basic and acidic residues. The span at 220 to 235 (NESGFWSADETSTASS) shows a compositional bias: polar residues. Over residues 255 to 271 (RSRHRAKHQTNPRSRPR) the composition is skewed to basic residues. Residues Ser282 and Ser284 each carry the phosphoserine modification. Positions 542 to 552 (SLLQPDQPSPE) are enriched in polar residues.

Belongs to the GPRASP family. Interacts with cytoplasmic tails of a variety of G protein-coupled receptors such as muscarinic acetylcholine receptor M1/CHRM1 and calcitonin receptor/CALCR.

Functionally, may play a role in regulation of a variety of G-protein coupled receptors. In Pongo abelii (Sumatran orangutan), this protein is G-protein coupled receptor-associated sorting protein 2 (GPRASP2).